The primary structure comprises 338 residues: Malate dehydrogenase, mitochondrial (338 aa).

A mitochondrion-targeting transit peptide spans 1-24 (MLSALARPASAALRRSFSTSAQNN). Residues 31 to 37 (GASGGIG) and Asp57 each bind NAD(+). Ser33 is a glycosylation site (O-linked (GlcNAc) serine). N6-acetyllysine; alternate occurs at positions 78 and 91. N6-succinyllysine; alternate occurs at positions 78 and 91. Substrate-binding residues include Arg104 and Arg110. NAD(+) contacts are provided by residues Asn117 and 140–142 (IAN). Residue Asn142 coordinates substrate. N6-acetyllysine is present on Lys165. Arg176 contributes to the substrate binding site. Lys185 bears the N6-acetyllysine; alternate mark. Lys185 bears the N6-succinyllysine; alternate mark. Residue His200 is the Proton acceptor of the active site. Lys203 is subject to N6-succinyllysine. An N6-acetyllysine; alternate mark is found at Lys215 and Lys239. N6-succinyllysine; alternate is present on residues Lys215 and Lys239. Position 239 is an N6-malonyllysine; alternate (Lys239). Phosphoserine is present on Ser246. Met251 is an NAD(+) binding site. Lys269 is subject to N6-succinyllysine. 4 positions are modified to N6-acetyllysine; alternate: Lys296, Lys301, Lys314, and Lys324. Lys296, Lys301, Lys314, and Lys324 each carry N6-succinyllysine; alternate. Ser326 carries the phosphoserine modification. N6-acetyllysine; alternate is present on residues Lys328, Lys329, and Lys335. Position 328 is an N6-succinyllysine; alternate (Lys328). At Lys329 the chain carries N6-malonyllysine; alternate. Residue Lys335 is modified to N6-succinyllysine; alternate.

It belongs to the LDH/MDH superfamily. MDH type 1 family. In terms of assembly, homodimer. Post-translationally, acetylation is enhanced after treatment either with trichostin A (TCA) or with nicotinamide (NAM) with the appearance of tri- and tetraacetylations. Glucose also increases acetylation.

Its subcellular location is the mitochondrion matrix. The catalysed reaction is (S)-malate + NAD(+) = oxaloacetate + NADH + H(+). With respect to regulation, enzyme activity is enhanced by acetylation. This Macaca fascicularis (Crab-eating macaque) protein is Malate dehydrogenase, mitochondrial (MDH2).